The following is a 227-amino-acid chain: MTIQKGIITLTILIFISGLLTAFLLLDDSHLSFFRAQQNQRKHYVERTLQLQKMTATKKQTACLDLPLNNNESVKQISIALEGSTDAIQYFLWCERMSLFKKSPKKGDNQGALKDFVTDEKLAYFRPHFSSPPRILNANKMPKLYWFSDSQAEVEINGTVSAVLIAEGDLKLTGKGRISGAVITSGNLTLDGVTLAYGKKTVVALVQQYSQWQLAEKSWSDFNVQDE.

Residues 7–26 (IITLTILIFISGLLTAFLLL) traverse the membrane as a helical segment.

The protein resides in the membrane. This is an uncharacterized protein from Haemophilus influenzae (strain ATCC 51907 / DSM 11121 / KW20 / Rd).